Reading from the N-terminus, the 316-residue chain is Retron Ec73 putative ribosyltransferase/DNA-binding protein (316 aa).

In terms of biological role, possible ribosyltransferase/DNA-binding component of antiviral defense system retron Ec73, composed of a non-coding RNA (ncRNA) followed by this protein then a reverse transcriptase (RT). Expression of this retron confers protection against bacteriophages SECphi4, SECphi6, SECphi27 and P1. At multiplicity of infection (MOI) of 0.02 cultures grow normally when infected with SECphi4 without collapsing, at MOI 2 cultures enter growth stasis. This is Retron Ec73 putative ribosyltransferase/DNA-binding protein from Escherichia coli.